The chain runs to 314 residues: Small glutamine-rich tetratricopeptide repeat-containing protein alpha (314 aa).

Positions 65–99 (ATASKEMPQDPRGPDRTPPSEEDSAEAERLKTEGN) are disordered. Basic and acidic residues predominate over residues 71 to 83 (MPQDPRGPDRTPP). T81 carries the post-translational modification Phosphothreonine. A Phosphoserine modification is found at S84. Residues 90-99 (EAERLKTEGN) show a composition bias toward basic and acidic residues. TPR repeat units follow at residues 91–124 (AERL…NPAN), 125–158 (AVYF…DPGY), and 159–192 (SKAY…DPDN). Position 137 is an N6-acetyllysine (K137). The interval 249-268 (GMISGGHNPLGTPGSSPQHS) is disordered. S302 is subject to Phosphoserine. The residue at position 304 (T304) is a Phosphothreonine. S306 carries the post-translational modification Phosphoserine.

This sequence belongs to the SGT family. As to quaternary structure, homodimer. Homooligomer. Interacts with DNAJC5 and DNAJC5B. Interacts (via TPR repeats) with HSP90AA1. Interacts (via Gln-rich region) with SLC2A1. Interacts with HSP90AB1. Interacts (via TPR repeats) with HSPA8/Hsc70; the interaction is direct. Interacts with BAG6 (via ubiquitin-like domain); interaction prevents interaction between BAG6 and RNF126. Forms a multiprotein complex, at least composed of DNAJB12, DNAJB14, HSPA8/Hsc70 and SGTA; interaction with DNAJB14 and HSPA8/Hsc70 is direct. In terms of assembly, (Microbial infection) Interacts with NS1 from parvovirus H-1. In terms of tissue distribution, ubiquitously expressed.

Its subcellular location is the cytoplasm. It localises to the nucleus. Functionally, co-chaperone that binds misfolded and hydrophobic patches-containing client proteins in the cytosol. Mediates their targeting to the endoplasmic reticulum but also regulates their sorting to the proteasome when targeting fails. Functions in tail-anchored/type II transmembrane proteins membrane insertion constituting with ASNA1 and the BAG6 complex a targeting module. Functions upstream of the BAG6 complex and ASNA1, binding more rapidly the transmembrane domain of newly synthesized proteins. It is also involved in the regulation of the endoplasmic reticulum-associated misfolded protein catabolic process via its interaction with BAG6: collaborates with the BAG6 complex to maintain hydrophobic substrates in non-ubiquitinated states. Competes with RNF126 for interaction with BAG6, preventing the ubiquitination of client proteins associated with the BAG6 complex. Binds directly to HSC70 and HSP70 and regulates their ATPase activity. This Rattus norvegicus (Rat) protein is Small glutamine-rich tetratricopeptide repeat-containing protein alpha (Sgta).